Here is a 365-residue protein sequence, read N- to C-terminus: tRNA-specific 2-thiouridylase MnmA (365 aa).

ATP is bound by residues A12–S19 and M38. C108 (nucleophile) is an active-site residue. C108 and C206 are joined by a disulfide. Position 132 (G132) interacts with ATP. The interval K156–Q158 is interaction with tRNA. The Cysteine persulfide intermediate role is filled by C206. The interval R312–Y313 is interaction with tRNA.

The protein belongs to the MnmA/TRMU family.

It is found in the cytoplasm. It carries out the reaction S-sulfanyl-L-cysteinyl-[protein] + uridine(34) in tRNA + AH2 + ATP = 2-thiouridine(34) in tRNA + L-cysteinyl-[protein] + A + AMP + diphosphate + H(+). Catalyzes the 2-thiolation of uridine at the wobble position (U34) of tRNA, leading to the formation of s(2)U34. The chain is tRNA-specific 2-thiouridylase MnmA from Carboxydothermus hydrogenoformans (strain ATCC BAA-161 / DSM 6008 / Z-2901).